An 874-amino-acid polypeptide reads, in one-letter code: Bifunctional apolipoprotein N-acyltransferase/polyprenol monophosphomannose synthase (874 aa).

Positions 1–593 (MKLGAWVAAQ…GRHRATSRSY (593 aa)) are apolipoprotein N-acyltransferase. Transmembrane regions (helical) follow at residues 23 to 42 (TRLV…FPPR), 72 to 89 (YGLL…PWIG), 94 to 115 (PGPW…GLFA), 177 to 194 (VALV…IEKW), and 206 to 223 (AVVL…AAIV). In terms of domain architecture, CN hydrolase spans 241-497 (VTVAVVQGNV…PAYLDSQVRL (257 aa)). Catalysis depends on Glu294, which acts as the Proton acceptor. Residue Lys359 is part of the active site. The Nucleophile role is filled by Cys409. The chain crosses the membrane as a helical span at residues 509–526 (PILQWILVGAAAAVVLVA). 2 disordered regions span residues 533 to 609 (FPRP…NRPS) and 852 to 874 (RARP…DVTE). Residues 594 to 874 (MTTGQPAPPA…SRVSRADVTE (281 aa)) are polyprenol monophosphomannose synthase.

In the N-terminal section; belongs to the CN hydrolase family. Apolipoprotein N-acyltransferase subfamily. The protein in the C-terminal section; belongs to the glycosyltransferase 2 family.

The protein localises to the cell membrane. It carries out the reaction N-terminal S-1,2-diacyl-sn-glyceryl-L-cysteinyl-[lipoprotein] + a glycerophospholipid = N-acyl-S-1,2-diacyl-sn-glyceryl-L-cysteinyl-[lipoprotein] + a 2-acyl-sn-glycero-3-phospholipid + H(+). The catalysed reaction is a di-trans,poly-cis-dolichyl phosphate + GDP-alpha-D-mannose = a di-trans,poly-cis-dolichyl beta-D-mannosyl phosphate + GDP. The protein operates within protein modification; lipoprotein biosynthesis (N-acyl transfer). Its function is as follows. Catalyzes the phospholipid dependent N-acylation of the N-terminal cysteine of apolipoprotein, the last step in lipoprotein maturation. Functionally, transfers mannose from GDP-mannose to lipid acceptors to form polyprenol monophosphomannose (PPM). PMM is an alkai-stable sugar donor which adds mannose-phosphate residues to triacylated-phosphatidyl-myo-inositol mannosides (PIM2), eventually leading to generation of the cell wall glycolipid lipoglycan modulins lipoarabinomannan (LAM) and lipomannan (LM). The sequence is that of Bifunctional apolipoprotein N-acyltransferase/polyprenol monophosphomannose synthase from Mycobacterium bovis (strain BCG / Pasteur 1173P2).